A 262-amino-acid polypeptide reads, in one-letter code: MNDILAKILAVKAEEVATARQMRSEAELLREAQARQDVRGFAQAIEDKIAQGKPGVIAEIKKASPSKGVLRENFDASEIAASYAAHGAACLSVLTDVQFFQGSHDNLRRARAACPLPVLRKDFILDPYQIISARAMGADCVLLIVAALSPTQLRDLEAVAMDLGMDVLVEVHDEAELDVALGMKTPLLGINNRNLRSFETRLETTLNLLPRIPAGKRVVTESGILQPDDVQLMRRHGVQAFLVGEAFMRAEEPGAELARLVA.

Belongs to the TrpC family.

It carries out the reaction 1-(2-carboxyphenylamino)-1-deoxy-D-ribulose 5-phosphate + H(+) = (1S,2R)-1-C-(indol-3-yl)glycerol 3-phosphate + CO2 + H2O. The protein operates within amino-acid biosynthesis; L-tryptophan biosynthesis; L-tryptophan from chorismate: step 4/5. This is Indole-3-glycerol phosphate synthase from Bordetella avium (strain 197N).